Consider the following 196-residue polypeptide: Small nuclear ribonucleoprotein-associated protein B (196 aa).

Residues 7–101 (AHSSRLANLI…ILSTVVEDKP (95 aa)) form the Sm domain. The Nuclear localization signal motif lies at 105 to 132 (KKERLVRDKKEKKQAQKQTKLRKEKEKK). The segment covering 108–118 (RLVRDKKEKKQ) has biased composition (basic and acidic residues). A disordered region spans residues 108–196 (RLVRDKKEKK…FQPPPGFKRK (89 aa)). A compositionally biased stretch (polar residues) spans 140–181 (NTANAKHTSSNSREIAQPSSSRYNGGNDNIGANRSRFNNEAP).

The protein belongs to the snRNP SmB/SmN family. In terms of assembly, component of the Sm core complex, present in spliceosomal snRNP U1, U2, U4/U6 and U5. The core complex contains SMB1, SMD1, SMD2, SMD3, SME1, SMX3 and SMX2 (Sm proteins B, D1, D2, D3, E, F and G, respectively), and is probably a heptameric ring structure. SMB1 specifically interacts with SMD3. Belongs to the CWC complex (or CEF1-associated complex), a spliceosome sub-complex reminiscent of a late-stage spliceosome composed of the U2, U5 and U6 snRNAs and at least BUD13, BUD31, BRR2, CDC40, CEF1, CLF1, CUS1, CWC2, CWC15, CWC21, CWC22, CWC23, CWC24, CWC25, CWC27, ECM2, HSH155, IST3, ISY1, LEA1, MSL1, NTC20, PRP8, PRP9, PRP11, PRP19, PRP21, PRP22, PRP45, PRP46, SLU7, SMB1, SMD1, SMD2, SMD3, SMX2, SMX3, SNT309, SNU114, SPP2, SYF1, SYF2, RSE1 and YJU2. Component of the U4/U6-U5 tri-snRNP complex composed of the U4, U6 and U5 snRNAs and at least PRP3, PRP4, PRP6, PRP8, PRP18, PRP38, SNU13, SNU23, SNU66, SNU114, SPP381, SMB1, SMD1, SMD2, SMD3, SMX2, SMX3, LSM2, LSM3, LSM4, LSM5, LSM6, LSM7, LSM8, BRR2 and DIB1. Interacts with the trimethylguanosine synthase TGS1.

It is found in the nucleus. The protein resides in the cytoplasm. Its function is as follows. Plays a role in pre-mRNA splicing as a core component of the spliceosomal U1, U2, U4 and U5 small nuclear ribonucleoproteins (snRNPs), the building blocks of the spliceosome. The sequence is that of Small nuclear ribonucleoprotein-associated protein B (SMB1) from Saccharomyces cerevisiae (strain ATCC 204508 / S288c) (Baker's yeast).